The chain runs to 341 residues: tRNA uridine(34) hydroxylase (341 aa).

Residues 139 to 233 form the Rhodanese domain; sequence SDPEVVLVDT…YLEEVPSTET (95 aa). Cysteine 193 serves as the catalytic Cysteine persulfide intermediate. 2 stretches are compositionally biased toward basic and acidic residues: residues 306–316 and 324–341; these read SLAEERGESHI and IEER…QANK. The disordered stretch occupies residues 306 to 341; sequence SLAEERGESHIGGDIQNIIEERRQEKNDKKAKQANK.

It belongs to the TrhO family.

It carries out the reaction uridine(34) in tRNA + AH2 + O2 = 5-hydroxyuridine(34) in tRNA + A + H2O. Functionally, catalyzes oxygen-dependent 5-hydroxyuridine (ho5U) modification at position 34 in tRNAs. The protein is tRNA uridine(34) hydroxylase of Colwellia psychrerythraea (strain 34H / ATCC BAA-681) (Vibrio psychroerythus).